The primary structure comprises 97 residues: Aspartyl/glutamyl-tRNA(Asn/Gln) amidotransferase subunit C (97 aa).

The protein belongs to the GatC family. As to quaternary structure, heterotrimer of A, B and C subunits.

The catalysed reaction is L-glutamyl-tRNA(Gln) + L-glutamine + ATP + H2O = L-glutaminyl-tRNA(Gln) + L-glutamate + ADP + phosphate + H(+). The enzyme catalyses L-aspartyl-tRNA(Asn) + L-glutamine + ATP + H2O = L-asparaginyl-tRNA(Asn) + L-glutamate + ADP + phosphate + 2 H(+). In terms of biological role, allows the formation of correctly charged Asn-tRNA(Asn) or Gln-tRNA(Gln) through the transamidation of misacylated Asp-tRNA(Asn) or Glu-tRNA(Gln) in organisms which lack either or both of asparaginyl-tRNA or glutaminyl-tRNA synthetases. The reaction takes place in the presence of glutamine and ATP through an activated phospho-Asp-tRNA(Asn) or phospho-Glu-tRNA(Gln). The chain is Aspartyl/glutamyl-tRNA(Asn/Gln) amidotransferase subunit C from Listeria welshimeri serovar 6b (strain ATCC 35897 / DSM 20650 / CCUG 15529 / CIP 8149 / NCTC 11857 / SLCC 5334 / V8).